Consider the following 638-residue polypeptide: Threonine--tRNA ligase (638 aa).

One can recognise a TGS domain in the interval 1-61 (MPNITLPDGS…EADTPLAIVT (61 aa)). Residues 242–533 (DHRKLGRLLD…LIEHYAGALP (292 aa)) are catalytic. 3 residues coordinate Zn(2+): C333, H384, and H510.

It belongs to the class-II aminoacyl-tRNA synthetase family. As to quaternary structure, homodimer. Zn(2+) is required as a cofactor.

The protein resides in the cytoplasm. It catalyses the reaction tRNA(Thr) + L-threonine + ATP = L-threonyl-tRNA(Thr) + AMP + diphosphate + H(+). Its function is as follows. Catalyzes the attachment of threonine to tRNA(Thr) in a two-step reaction: L-threonine is first activated by ATP to form Thr-AMP and then transferred to the acceptor end of tRNA(Thr). Also edits incorrectly charged L-seryl-tRNA(Thr). The protein is Threonine--tRNA ligase of Aromatoleum aromaticum (strain DSM 19018 / LMG 30748 / EbN1) (Azoarcus sp. (strain EbN1)).